The chain runs to 308 residues: Olfactory receptor 5H19 (308 aa).

Residues 1–27 are Extracellular-facing; sequence MEKNATLLTEFVLTGLSHQPLWNIPLF. The N-linked (GlcNAc...) asparagine glycan is linked to Asn4. Residues 28-48 traverse the membrane as a helical segment; the sequence is LVFLVIYLITIVGNVSLITLI. The Cytoplasmic segment spans residues 49–55; that stretch reads WTDPHLH. Residues 56-76 form a helical membrane-spanning segment; the sequence is IPMYLFLGSLAFVDTSISSIV. The Extracellular portion of the chain corresponds to 77–92; that stretch reads VPKMLLNFFGKSKVIT. A helical membrane pass occupies residues 93–113; sequence LSECMAQFFLFNISATTECFL. A disulfide bridge connects residues Cys96 and Cys188. Over 114-143 the chain is Cytoplasmic; that stretch reads LAAMAYDRYVAICKPLLYPVVMTNGLCVWL. Residues 144-164 form a helical membrane-spanning segment; the sequence is IALSFVAGIIHALIHEGFLLR. The Extracellular segment spans residues 165–197; that stretch reads LTFCNSNMIHNFYCDIISLLKISCTDTSLNYLI. A helical membrane pass occupies residues 198–218; the sequence is VFIFSGSIQVFTISTILVSYT. Topologically, residues 219-238 are cytoplasmic; the sequence is IILFTILKKKSAKGIKKAFS. The chain crosses the membrane as a helical span at residues 239–259; sequence TCGAHLLSVSLYYGPLLFMYV. The Extracellular segment spans residues 260–270; that stretch reads HPASSEVDDQD. Residues 271–291 form a helical membrane-spanning segment; the sequence is MIDSLFYTVIIPVLNPIIYSL. Over 292–308 the chain is Cytoplasmic; that stretch reads RNKQVIDSLAKFLKRNV.

It belongs to the G-protein coupled receptor 1 family.

It localises to the cell membrane. Its function is as follows. Potential odorant receptor. The protein is Olfactory receptor 5H19 of Mus musculus (Mouse).